The chain runs to 308 residues: Ornithine carbamoyltransferase (308 aa).

Carbamoyl phosphate is bound by residues 56–59 (STRT), glutamine 83, arginine 107, and 134–137 (HPCQ). L-ornithine contacts are provided by residues asparagine 165, aspartate 225, and 229 to 230 (SM). Carbamoyl phosphate is bound by residues 266-267 (CL) and arginine 294.

This sequence belongs to the aspartate/ornithine carbamoyltransferase superfamily. OTCase family.

The protein localises to the cytoplasm. It carries out the reaction carbamoyl phosphate + L-ornithine = L-citrulline + phosphate + H(+). It functions in the pathway amino-acid biosynthesis; L-arginine biosynthesis; L-arginine from L-ornithine and carbamoyl phosphate: step 1/3. Functionally, reversibly catalyzes the transfer of the carbamoyl group from carbamoyl phosphate (CP) to the N(epsilon) atom of ornithine (ORN) to produce L-citrulline. The protein is Ornithine carbamoyltransferase of Roseobacter denitrificans (strain ATCC 33942 / OCh 114) (Erythrobacter sp. (strain OCh 114)).